The sequence spans 1088 residues: Exportin-T (1088 aa).

The span at 435–503 shows a compositional bias: low complexity; sequence KNNNNKNKNT…VKNANNIKNN (69 aa). Disordered stretches follow at residues 435 to 513 and 1059 to 1088; these read KNNN…DDDD and LNNNNNINNNNNNINNNGHTNGNGVNKNGH.

The protein belongs to the exportin family.

It is found in the nucleus. The protein localises to the cytoplasm. Functionally, mediates the nuclear export of aminoacylated tRNAs. The protein is Exportin-T (xpot) of Dictyostelium discoideum (Social amoeba).